The primary structure comprises 137 residues: Large ribosomal subunit protein uL16 (137 aa).

Belongs to the universal ribosomal protein uL16 family. In terms of assembly, part of the 50S ribosomal subunit.

Binds 23S rRNA and is also seen to make contacts with the A and possibly P site tRNAs. The protein is Large ribosomal subunit protein uL16 of Pseudomonas putida (strain ATCC 47054 / DSM 6125 / CFBP 8728 / NCIMB 11950 / KT2440).